We begin with the raw amino-acid sequence, 182 residues long: Probable peptidyl-prolyl cis-trans isomerase A (182 aa).

Residues 13-181 form the PPIase cyclophilin-type domain; the sequence is QNATATLHTN…EPVVIDSITI (169 aa). Positions 161–182 are disordered; it reads TTATDGNDRPTEPVVIDSITIS.

It belongs to the cyclophilin-type PPIase family.

It localises to the cytoplasm. It catalyses the reaction [protein]-peptidylproline (omega=180) = [protein]-peptidylproline (omega=0). In terms of biological role, PPIases accelerate the folding of proteins. It catalyzes the cis-trans isomerization of proline imidic peptide bonds in oligopeptides. This chain is Probable peptidyl-prolyl cis-trans isomerase A (ppiA), found in Mycobacterium leprae (strain TN).